Reading from the N-terminus, the 142-residue chain is Large ribosomal subunit protein uL11 (142 aa).

Belongs to the universal ribosomal protein uL11 family. In terms of assembly, part of the ribosomal stalk of the 50S ribosomal subunit. Interacts with L10 and the large rRNA to form the base of the stalk. L10 forms an elongated spine to which L12 dimers bind in a sequential fashion forming a multimeric L10(L12)X complex. Post-translationally, one or more lysine residues are methylated.

In terms of biological role, forms part of the ribosomal stalk which helps the ribosome interact with GTP-bound translation factors. This chain is Large ribosomal subunit protein uL11, found in Shewanella baltica (strain OS223).